The following is a 233-amino-acid chain: UPF0758 protein Rcas_0037 (233 aa).

Residues 107–229 (QIRSPTDAAQ…FVSMRERGLA (123 aa)) form the MPN domain. His178, His180, and Asp191 together coordinate Zn(2+). A JAMM motif motif is present at residues 178-191 (HNHPSGDPTPSPED).

The protein belongs to the UPF0758 family.

This is UPF0758 protein Rcas_0037 from Roseiflexus castenholzii (strain DSM 13941 / HLO8).